A 500-amino-acid chain; its full sequence is Metacaspase-5 (500 aa).

Positions 1 to 18 (MDAALALLFGQVATAVLP) are cleaved as a signal peptide. Residues 19–63 (YVVNSIGRVPRPKRVDVKKAMGEAHQCRPVVPYRAPRPYTEGRVK) form an important for catalytic activity region. N-linked (GlcNAc...) asparagine glycans are attached at residues Asn70 and Asn113. His147 is an active-site residue. Asp162, Asp178, and Asp179 together coordinate Ca(2+). Residue Cys202 is part of the active site. Asp209 serves as a coordination point for Ca(2+). Residues Asn219, Asn235, Asn258, Asn264, Asn283, and Asn332 are each glycosylated (N-linked (GlcNAc...) asparagine). Disordered stretches follow at residues 358-419 (EATL…QAYY) and 444-500 (QPPQ…PGRK). A compositionally biased stretch (polar residues) spans 379-389 (ASTSNGKSNPG). The segment covering 444–461 (QPPQQAYYQPPQQAYYQP) has biased composition (low complexity).

It belongs to the peptidase C14B family.

Its subcellular location is the recycling endosome. Functionally, cysteine protease that cleaves specifically after arginine or lysine residues. The polypeptide is Metacaspase-5 (Trypanosoma brucei brucei).